The chain runs to 146 residues: Large ribosomal subunit protein uL15 (146 aa).

Residues 1-46 form a disordered region; sequence MAIELHDLKPAPGAHKAKTRVGRGEGSKGKTAGRGTKGTGARKNVP. Positions 29 to 43 are enriched in low complexity; that stretch reads GKTAGRGTKGTGARK.

It belongs to the universal ribosomal protein uL15 family. Part of the 50S ribosomal subunit.

Its function is as follows. Binds to the 23S rRNA. The polypeptide is Large ribosomal subunit protein uL15 (Cutibacterium acnes (strain DSM 16379 / KPA171202) (Propionibacterium acnes)).